The primary structure comprises 147 residues: Angiogenin (147 aa).

The first 24 residues, 1-24 (MVMGLGVLLLVFVLGLGLTPPTLA), serve as a signal peptide directing secretion. Residue Q25 is modified to Pyrrolidone carboxylic acid. H37 (proton acceptor) is an active-site residue. Positions 45 and 46 each coordinate tRNA. 3 disulfide bridges follow: C50-C105, C63-C116, and C81-C131. The Nucleolar localization signal motif lies at 55–59 (RRRGL). TRNA is bound by residues C105 and V127. H138 functions as the Proton donor in the catalytic mechanism.

Belongs to the pancreatic ribonuclease family. As to quaternary structure, homodimer. Interacts with RNH1; inhibiting ANG ribonuclease activity. Interacts with PCNA.

The protein resides in the secreted. Its subcellular location is the nucleus. It localises to the nucleolus. It is found in the cytoplasm. The protein localises to the stress granule. Has weak tRNA ribonuclease activity by itself due to partial autoinhibition by its C-terminus, which folds into a short alpha-helix that partially occludes the substrate-binding site. In absence of stress, the ribonuclease activity is inhibited by RNH1 in the cytoplasm. In response to stress, dissociates from RNH1 in the cytoplasm and associates with cytoplasmic ribosomes with vacant A-sites: ribosomes directly activate the tRNA ribonuclease activity of ANG by refolding the C-terminal alpha-helix. In response to stress, the angiogenic activity of ANG is inhibited by RNH1 in the nucleus. In terms of biological role, secreted ribonuclease that can either promote or restrict cell proliferation of target cells, depending on the context. Endocytosed in target cells via its receptor PLXNB2 and translocates to the cytoplasm or nucleus. Under stress conditions, localizes to the cytoplasm and promotes the assembly of stress granules (SGs): specifically cleaves a subset of tRNAs within anticodon loops to produce tRNA-derived stress-induced fragments (tiRNAs), resulting in translation repression and inhibition of cell proliferation. tiRNas also prevent formation of apoptosome, thereby promoting cell survival. Preferentially cleaves RNAs between a pyrimidine and an adenosine residue, suggesting that it cleaves the anticodon loop of tRNA(Ala) (32-UUAGCAU-38) after positions 33 and 36. Cleaves a subset of tRNAs, including tRNA(Ala), tRNA(Glu), tRNA(Gly), tRNA(Lys), tRNA(Val), tRNA(His), tRNA(Asp) and tRNA(Sec). Under growth conditions and in differentiated cells, translocates to the nucleus and stimulates ribosomal RNA (rRNA) transcription, including that containing the initiation site sequences of 45S rRNA, thereby promoting cell growth and proliferation. Angiogenin induces vascularization of normal and malignant tissues via its ability to promote rRNA transcription. Involved in hematopoietic stem and progenitor cell (HSPC) growth and survival by promoting rRNA transcription in growth conditions and inhibiting translation in response to stress, respectively. Mediates the crosstalk between myeloid and intestinal epithelial cells to protect the intestinal epithelial barrier integrity: secreted by myeloid cells and promotes intestinal epithelial cells proliferation and survival. Also mediates osteoclast-endothelial cell crosstalk in growing bone: produced by osteoclasts and protects the neighboring vascular cells against senescence by promoting rRNA transcription. In Gorilla gorilla gorilla (Western lowland gorilla), this protein is Angiogenin (ANG).